Here is a 225-residue protein sequence, read N- to C-terminus: Methyl-CpG-binding domain-containing protein 6 (225 aa).

Residues 25 to 92 (GDGTLDSSAK…PGWRVEDKIR (68 aa)) form a disordered region. One can recognise an MBD domain in the interval 71–146 (RKRAAPGDNW…ENTYFNPDHF (76 aa)).

As to quaternary structure, homodimer and heterodimer with MBD5. Interacts with DDM1 via its MBD domain. Interacts with NTF2, RPS2C, HDA6 and AGO4. As to expression, expressed in rosette leaves, buds, flowers, stems, mature seeds and roots.

It is found in the nucleus. Its subcellular location is the chromosome. The protein localises to the nucleolus. Transcriptional regulator that binds CpG, CpNpN and CpNpG (N is A, T, or C) islands in promoters regardless the DNA methylation status. Plays probably a role in gene silencing. May associate with histone deacetylase proteins (HDAC). Required for nucleolar dominance that consist in the silencing of rRNA genes inherited from one progenitor in genetic hybrids. Recruited to rRNA genes in a DRM2-dependent manner. Maintains gene silencing by interacting with RNA binding proteins (e.g. NTF2, RPS2C, HDA6 and AGO4) and by regulating DNA methylation status. This is Methyl-CpG-binding domain-containing protein 6 from Arabidopsis thaliana (Mouse-ear cress).